The primary structure comprises 168 residues: Photosystem I assembly protein Ycf3 (168 aa).

TPR repeat units follow at residues 35 to 68 (AFTY…EIDP), 72 to 105 (SYIL…NPSL), and 120 to 153 (GEQA…APSN).

The protein belongs to the Ycf3 family.

The protein resides in the plastid. The protein localises to the chloroplast thylakoid membrane. Functionally, essential for the assembly of the photosystem I (PSI) complex. May act as a chaperone-like factor to guide the assembly of the PSI subunits. The polypeptide is Photosystem I assembly protein Ycf3 (Physcomitrium patens (Spreading-leaved earth moss)).